A 259-amino-acid polypeptide reads, in one-letter code: Aliphatic sulfonates import ATP-binding protein SsuB 2 (259 aa).

The ABC transporter domain maps to 17 to 238 (LDILGLWKGF…VRSSQAFTSI (222 aa)). 49 to 56 (GRSGCGKS) is an ATP binding site.

This sequence belongs to the ABC transporter superfamily. Aliphatic sulfonates importer (TC 3.A.1.17.2) family. As to quaternary structure, the complex is composed of two ATP-binding proteins (SsuB), two transmembrane proteins (SsuC) and a solute-binding protein (SsuA).

The protein resides in the cell inner membrane. The enzyme catalyses ATP + H2O + aliphatic sulfonate-[sulfonate-binding protein]Side 1 = ADP + phosphate + aliphatic sulfonateSide 2 + [sulfonate-binding protein]Side 1.. Its function is as follows. Part of the ABC transporter complex SsuABC involved in aliphatic sulfonates import. Responsible for energy coupling to the transport system. In Agrobacterium fabrum (strain C58 / ATCC 33970) (Agrobacterium tumefaciens (strain C58)), this protein is Aliphatic sulfonates import ATP-binding protein SsuB 2.